Here is a 351-residue protein sequence, read N- to C-terminus: sn-glycerol-3-phosphate import ATP-binding protein UgpC (351 aa).

Residues 4 to 234 enclose the ABC transporter domain; it reads ITLKDLVKSY…PATLFVAGFI (231 aa). 36-43 serves as a coordination point for ATP; it reads GPSGCGKS.

It belongs to the ABC transporter superfamily. sn-glycerol-3-phosphate importer (TC 3.A.1.1.3) family. In terms of assembly, the complex is composed of two ATP-binding proteins (UgpC), two transmembrane proteins (UgpA and UgpE) and a solute-binding protein (UgpB).

It is found in the cell inner membrane. It carries out the reaction sn-glycerol 3-phosphate(out) + ATP + H2O = sn-glycerol 3-phosphate(in) + ADP + phosphate + H(+). Functionally, part of the ABC transporter complex UgpBAEC involved in sn-glycerol-3-phosphate (G3P) import. Responsible for energy coupling to the transport system. The polypeptide is sn-glycerol-3-phosphate import ATP-binding protein UgpC (Ruegeria sp. (strain TM1040) (Silicibacter sp.)).